Consider the following 121-residue polypeptide: uncharacterized protein (121 aa).

Residues Ile-6 to Ile-26 traverse the membrane as a helical segment.

The protein resides in the membrane. This is an uncharacterized protein from Caenorhabditis elegans.